We begin with the raw amino-acid sequence, 166 residues long: Bacterial microcompartment shell protein EutK (166 aa).

Residues 4-88 form the BMC domain; the sequence is ALGLLEVDGM…PDDDTQWLVT (85 aa). A EutK-Ctail domain is found at 109-165; sequence ESADELLALLTSVRQGMTAGEVAAHFGWPLEKARNALEQLFSAGTLRKRSSRYRLKP.

Belongs to the bacterial microcompartments protein family. In terms of assembly, monomeric in solution.

It is found in the bacterial microcompartment. Its pathway is amine and polyamine degradation; ethanolamine degradation. Functionally, probably a minor component of the bacterial microcompartment (BMC) shell dedicated to ethanolamine degradation. It might bind nucleic acids. The protein is Bacterial microcompartment shell protein EutK (eutK) of Escherichia coli (strain K12).